We begin with the raw amino-acid sequence, 128 residues long: MANSRRVSRVSSLIKREVSQMLLHDIKDDRVGAGMVSVTEVDVSGDLQHATIFVSIYGSEQAQAETMEGLKSSTSFVRRELSHRMRLRRSPEVVFRQDHSLERGDRMVHLLNQIKDTIPEEEGITEEE.

The protein belongs to the RbfA family. As to quaternary structure, monomer. Binds 30S ribosomal subunits, but not 50S ribosomal subunits or 70S ribosomes.

It is found in the cytoplasm. One of several proteins that assist in the late maturation steps of the functional core of the 30S ribosomal subunit. Associates with free 30S ribosomal subunits (but not with 30S subunits that are part of 70S ribosomes or polysomes). Required for efficient processing of 16S rRNA. May interact with the 5'-terminal helix region of 16S rRNA. The chain is Ribosome-binding factor A from Rippkaea orientalis (strain PCC 8801 / RF-1) (Cyanothece sp. (strain PCC 8801)).